The following is a 457-amino-acid chain: Hepatocyte nuclear factor 3-beta (457 aa).

Residues 14–93 (DWSSYYAEPE…AGAMAGMGGS (80 aa)) are transactivation domain 1. The Nuclear localization signal motif lies at 106-113 (LSPSLSPL). Thr156 carries the phosphothreonine modification. The segment at residues 159–252 (KPPYSYISLI…FENGCYLRRQ (94 aa)) is a DNA-binding region (fork-head). Phosphoserine is present on residues Ser212 and Ser283. A compositionally biased stretch (low complexity) spans 280–292 (AQASQAQLGEAAG). A disordered region spans residues 280–365 (AQASQAQLGE…PGLPPEAHLK (86 aa)). The segment covering 298 to 310 (PAGTESPHSSASP) has biased composition (polar residues). The residue at position 301 (Thr301) is a Phosphothreonine. Residues Ser303, Ser306, Ser307, and Ser309 each carry the phosphoserine modification. Residues 339 to 352 (PGQQQQAAAHLLGP) are compositionally biased toward low complexity. The interval 361–457 (EAHLKPEHHY…VYSRPIMNSS (97 aa)) is transactivation domain 2. Phosphoserine occurs at positions 436 and 457.

In terms of assembly, binds DNA as a monomer. Binds TLE1. Interacts with FOXA1 and FOXA3. Interacts with PRKDC. Interacts with AKT1. Interacts with TET1; this interaction may recruit TET1 to specific genomic loci to mediate their demethylation. In terms of processing, phosphorylation on Thr-156 abolishes binding to target promoters and subsequent transcription activation upon insulin stimulation.

The protein resides in the nucleus. It is found in the cytoplasm. Transcription factor that is involved in embryonic development, establishment of tissue-specific gene expression and regulation of gene expression in differentiated tissues. Is thought to act as a 'pioneer' factor opening the compacted chromatin for other proteins through interactions with nucleosomal core histones and thereby replacing linker histones at target enhancer and/or promoter sites. Binds DNA with the consensus sequence 5'-[AC]A[AT]T[AG]TT[GT][AG][CT]T[CT]-3'. In embryonic development is required for notochord formation. Involved in the development of multiple endoderm-derived organ systems such as the liver, pancreas and lungs; FOXA1 and FOXA2 seem to have at least in part redundant roles. Originally described as a transcription activator for a number of liver genes such as AFP, albumin, tyrosine aminotransferase, PEPCK, etc. Interacts with the cis-acting regulatory regions of these genes. Involved in glucose homeostasis; regulates the expression of genes important for glucose sensing in pancreatic beta-cells and glucose homeostasis. Involved in regulation of fat metabolism. Binds to fibrinogen beta promoter and is involved in IL6-induced fibrinogen beta transcriptional activation. The protein is Hepatocyte nuclear factor 3-beta (FOXA2) of Homo sapiens (Human).